The following is a 600-amino-acid chain: Probable translation initiation factor IF-2 (600 aa).

The tr-type G domain occupies 13–228 (LRTPIVAVLG…VLMGLAQRYM (216 aa)). Residues 22-29 (GHVDHGKT) form a G1 region. 22–29 (GHVDHGKT) contributes to the GTP binding site. The G2 stretch occupies residues 47 to 51 (AITQH). Residues 84 to 87 (DTPG) are G3. GTP-binding positions include 84 to 88 (DTPGH) and 138 to 141 (NKID). Positions 138 to 141 (NKID) are G4. The interval 140–162 (IDTTPGWNPNPDAPVQGTYDDQS) is disordered. Residues 206–208 (SAE) form a G5 region.

The protein belongs to the TRAFAC class translation factor GTPase superfamily. Classic translation factor GTPase family. IF-2 subfamily.

Functionally, function in general translation initiation by promoting the binding of the formylmethionine-tRNA to ribosomes. Seems to function along with eIF-2. This chain is Probable translation initiation factor IF-2, found in Halobacterium salinarum (strain ATCC 700922 / JCM 11081 / NRC-1) (Halobacterium halobium).